The chain runs to 489 residues: Acetyl-coenzyme A carboxylase carboxyl transferase subunit beta, chloroplastic (489 aa).

The region spanning 225 to 489 is the CoA carboxyltransferase N-terminal domain; the sequence is LWIQCDNCYG…FFPLNKTEIK (265 aa). Positions 229, 232, 245, and 248 each coordinate Zn(2+). Residues 229–248 form a C4-type zinc finger; that stretch reads CDNCYGLMYKKVEMNVCEEC.

It belongs to the AccD/PCCB family. Acetyl-CoA carboxylase is a heterohexamer composed of biotin carboxyl carrier protein, biotin carboxylase and 2 subunits each of ACCase subunit alpha and ACCase plastid-coded subunit beta (accD). It depends on Zn(2+) as a cofactor.

Its subcellular location is the plastid. It is found in the chloroplast stroma. It carries out the reaction N(6)-carboxybiotinyl-L-lysyl-[protein] + acetyl-CoA = N(6)-biotinyl-L-lysyl-[protein] + malonyl-CoA. It participates in lipid metabolism; malonyl-CoA biosynthesis; malonyl-CoA from acetyl-CoA: step 1/1. In terms of biological role, component of the acetyl coenzyme A carboxylase (ACC) complex. Biotin carboxylase (BC) catalyzes the carboxylation of biotin on its carrier protein (BCCP) and then the CO(2) group is transferred by the transcarboxylase to acetyl-CoA to form malonyl-CoA. This chain is Acetyl-coenzyme A carboxylase carboxyl transferase subunit beta, chloroplastic, found in Draba nemorosa (Woodland whitlowgrass).